A 502-amino-acid polypeptide reads, in one-letter code: DEP domain-containing protein 7 (502 aa).

The 91-residue stretch at 37–127 (LQTQVEVKKR…SSCSLYRFTT (91 aa)) folds into the DEP domain.

Belongs to the DEPDC7 family.

The sequence is that of DEP domain-containing protein 7 (DEPDC7) from Macaca fascicularis (Crab-eating macaque).